A 500-amino-acid polypeptide reads, in one-letter code: L-arabinose isomerase (500 aa).

Mn(2+) is bound by residues Glu306, Glu333, His350, and His450.

This sequence belongs to the arabinose isomerase family. As to quaternary structure, homohexamer. Mn(2+) serves as cofactor.

The catalysed reaction is beta-L-arabinopyranose = L-ribulose. It functions in the pathway carbohydrate degradation; L-arabinose degradation via L-ribulose; D-xylulose 5-phosphate from L-arabinose (bacterial route): step 1/3. In terms of biological role, catalyzes the conversion of L-arabinose to L-ribulose. This Escherichia coli O157:H7 protein is L-arabinose isomerase.